Consider the following 365-residue polypeptide: Peptide chain release factor 2 (365 aa).

N5-methylglutamine is present on Q252.

This sequence belongs to the prokaryotic/mitochondrial release factor family. Post-translationally, methylated by PrmC. Methylation increases the termination efficiency of RF2.

Its subcellular location is the cytoplasm. Its function is as follows. Peptide chain release factor 2 directs the termination of translation in response to the peptide chain termination codons UGA and UAA. The protein is Peptide chain release factor 2 of Escherichia coli O9:H4 (strain HS).